A 302-amino-acid chain; its full sequence is Large ribosomal subunit protein uL29m (302 aa).

A mitochondrion-targeting transit peptide spans 1–38 (MASSGAARPAASRVLQRCQPFSSSTSCAAPVTTWRTLA). The segment at 255–302 (EPVADHLETPETSGQEKVGELSPAGAVDPSTILASKTGKPVTDAPRSS) is disordered.

Belongs to the universal ribosomal protein uL29 family. As to quaternary structure, component of the mitochondrial large ribosomal subunit. Mature mitochondrial ribosomes consist of a small (37S) and a large (54S) subunit. The 37S subunit contains at least 33 different proteins and 1 molecule of RNA (15S). The 54S subunit contains at least 45 different proteins and 1 molecule of RNA (21S).

Its subcellular location is the mitochondrion. The chain is Large ribosomal subunit protein uL29m (MRPL4) from Pyricularia oryzae (strain 70-15 / ATCC MYA-4617 / FGSC 8958) (Rice blast fungus).